A 319-amino-acid chain; its full sequence is Lipopolysaccharide heptosyltransferase 1 (319 aa).

ADP-L-glycero-beta-D-manno-heptose-binding residues include T187, T188, K192, E222, M242, D261, T262, G263, and H266.

Belongs to the glycosyltransferase 9 family.

The protein localises to the cell inner membrane. It catalyses the reaction an alpha-Kdo-(2-&gt;4)-alpha-Kdo-(2-&gt;6)-lipid A + ADP-L-glycero-beta-D-manno-heptose = an L-alpha-D-Hep-(1-&gt;5)-[alpha-Kdo-(2-&gt;4)]-alpha-Kdo-(2-&gt;6)-lipid A + ADP + H(+). The enzyme catalyses alpha-Kdo-(2-&gt;4)-alpha-Kdo-(2-&gt;6)-lipid A (E. coli) + ADP-L-glycero-beta-D-manno-heptose = L-alpha-D-Hep-(1-&gt;5)-[alpha-Kdo-(2-&gt;4)]-alpha-Kdo-(2-&gt;6)-lipid A (E. coli) + ADP + H(+). The protein operates within bacterial outer membrane biogenesis; LPS core biosynthesis. In terms of biological role, glycosyltransferase involved in the biosynthesis of the core oligosaccharide region of lipopolysaccharide (LPS). Catalyzes the addition of the first heptose unit to one 3-deoxy-D-manno-octulosonic acid (Kdo) residue of the Kdo2-lipid A module. The analog ADP-mannose can serve as an alternative donor in place of ADP-L-glycero-D-manno-heptose for the glycosylation of Kdo2-lipid A. Displays no activity with ADP-glucose, GDP-mannose, UDP-glucose or UDP-galactose. The protein is Lipopolysaccharide heptosyltransferase 1 of Escherichia coli (strain K12).